Consider the following 366-residue polypeptide: Dehydrogenase aclE (366 aa).

The first 19 residues, 1–19 (MSKRIRLGIVGLSADPSHC), serve as a signal peptide directing secretion. A glycan (N-linked (GlcNAc...) asparagine) is linked at Asn-330.

Belongs to the Gfo/Idh/MocA family.

It functions in the pathway mycotoxin biosynthesis. In terms of biological role, dehydrogenase; part of the gene cluster that mediates the biosynthesis of aspirochlorine (or antibiotic A30641), an unusual halogenated spiro compound with distinctive antifungal properties due to selective inhibition of protein biosynthesis, and which is also active against bacteria, viruses, and murine tumor cells. The non-ribosomal peptide synthetase (NRPS) aclP is responsible the formation of the diketopiperazine (DKP) core from the condensation of 2 phenylalanine residues. One Phe residue is tailored into chlorotyrosine by hydroxylation and chlorination, whereas the second Phe undergoes an unprecedented C-C bond cleavage to be converted into glycine. After formation of the DKP, sulfur is incorporated into the DKP by conjugation with glutathione by aclG, followed by its stepwise degradation to the thiol by aclI, aclJ and aclK, and the dithiol oxidation by aclT. In addition, oxygenases (aclB, aclC, aclL and aclO) and O-methyltransferases (aclM and aclU) act as tailoring enzymes to produce the intermediate dechloroaspirochlorine. Ultimately, chlorination of dechloroaspirochlorine by the halogenase aclH is the last step in the aspirochlorine pathway. This Aspergillus oryzae (strain ATCC 42149 / RIB 40) (Yellow koji mold) protein is Dehydrogenase aclE.